Here is a 331-residue protein sequence, read N- to C-terminus: Probable tRNA pseudouridine synthase B (331 aa).

The active-site Nucleophile is Asp66. A PUA domain is found at 233-307 (INKIIVKDSA…NEEDNREKYK (75 aa)).

The protein belongs to the pseudouridine synthase TruB family. Type 2 subfamily.

It carries out the reaction uridine(55) in tRNA = pseudouridine(55) in tRNA. In terms of biological role, could be responsible for synthesis of pseudouridine from uracil-55 in the psi GC loop of transfer RNAs. The protein is Probable tRNA pseudouridine synthase B of Methanococcus aeolicus (strain ATCC BAA-1280 / DSM 17508 / OCM 812 / Nankai-3).